The following is a 432-amino-acid chain: MTNVVVVGSQWGDEGKGKIVDWLSERADIVVRFQGGHNAGHTLVIDGTSYKLSLLPSGVVRPGKMAVIGNGVVVDPHALIAEIEKLSAQGVTITPDNLRIADNATLILSLHRELDAMREDAASNSGTKIGTTRRGIGPAYEDKVGRRAIRVMDLADLDSLPGKVDRILTHHNALRRGLGVAEVSHQTIMDELTSVAERVLPFRDTVWLFLDKERRKGARILFEGAQGSLLDIDHGTYPFVTSSNTVAGQAAAGSGMGPGSLGYILGITKAYTTRVGEGPFPTELTDEIGQFLGEKGHEFGTVTGRKRRCGWFDAALVRQSVATNGITGIALTKLDVLDGLEELKICVGYMLDGEQIDHLPASQGAQARVEPIYVTLEGWKESTVGARSWADLPAQAIKYVRQVEELIGAPVALLSTSPERDDTILVTDPFED.

GTP-binding positions include 12–18 (GDEGKGK) and 40–42 (GHT). Aspartate 13 (proton acceptor) is an active-site residue. Residues aspartate 13 and glycine 40 each coordinate Mg(2+). IMP is bound by residues 13–16 (DEGK), 38–41 (NAGH), threonine 132, arginine 146, glutamine 226, threonine 241, and arginine 305. The Proton donor role is filled by histidine 41. 301-307 (TVTGRKR) contacts substrate. GTP-binding positions include arginine 307, 333–335 (KLD), and 415–417 (STS).

It belongs to the adenylosuccinate synthetase family. As to quaternary structure, homodimer. The cofactor is Mg(2+).

Its subcellular location is the cytoplasm. It catalyses the reaction IMP + L-aspartate + GTP = N(6)-(1,2-dicarboxyethyl)-AMP + GDP + phosphate + 2 H(+). It functions in the pathway purine metabolism; AMP biosynthesis via de novo pathway; AMP from IMP: step 1/2. Plays an important role in the de novo pathway of purine nucleotide biosynthesis. Catalyzes the first committed step in the biosynthesis of AMP from IMP. The protein is Adenylosuccinate synthetase of Rhizobium etli (strain ATCC 51251 / DSM 11541 / JCM 21823 / NBRC 15573 / CFN 42).